The following is a 488-amino-acid chain: 2,3-bisphosphoglycerate-independent phosphoglycerate mutase (488 aa).

The Phosphoserine intermediate role is filled by serine 10. Mn(2+) is bound at residue serine 10. Substrate contacts are provided by residues histidine 69, 99 to 100 (RD), arginine 135, arginine 142, 215 to 218 (RADR), and lysine 290. Residues aspartate 359, histidine 363, aspartate 400, histidine 401, and histidine 430 each contribute to the Mn(2+) site.

Belongs to the BPG-independent phosphoglycerate mutase family. Monomer. It depends on Mn(2+) as a cofactor.

It localises to the cytoplasm. The catalysed reaction is (2R)-2-phosphoglycerate = (2R)-3-phosphoglycerate. It participates in carbohydrate degradation; glycolysis; pyruvate from D-glyceraldehyde 3-phosphate: step 3/5. Its function is as follows. Catalyzes the interconversion of 2-phosphoglycerate and 3-phosphoglycerate. The chain is 2,3-bisphosphoglycerate-independent phosphoglycerate mutase from Prunus dulcis (Almond).